The chain runs to 434 residues: Enolase A (434 aa).

Substrate is bound by residues histidine 160 and glutamate 169. The active-site Proton donor is the glutamate 212. Mg(2+) is bound by residues aspartate 247, glutamate 296, and aspartate 321. 2 residues coordinate substrate: glutamate 296 and aspartate 321. The active-site Proton acceptor is lysine 346. Substrate-binding positions include 373–376 and lysine 397; that span reads SHRS.

This sequence belongs to the enolase family. In terms of assembly, homodimer. The cofactor is Mg(2+).

The protein localises to the cytoplasm. The catalysed reaction is (2R)-2-phosphoglycerate = phosphoenolpyruvate + H2O. The protein operates within carbohydrate degradation; glycolysis; pyruvate from D-glyceraldehyde 3-phosphate: step 4/5. This chain is Enolase A (enoA), found in Dictyostelium discoideum (Social amoeba).